The sequence spans 1002 residues: Leucine-rich repeat receptor-like serine/threonine-protein kinase BAM2 (1002 aa).

The N-terminal stretch at 1–22 (MKLLLLLLLLLLLHISHSFTVA) is a signal peptide. The Extracellular portion of the chain corresponds to 23-636 (KPITELHALL…SHVKPLSATT (614 aa)). Residues N51, N80, N97, N123, N130, N153, and N164 are each glycosylated (N-linked (GlcNAc...) asparagine). 22 LRR repeats span residues 68–92 (LRHV…VAHL), 93–116 (PLLQ…ISNL), 118–140 (ELRH…LSSG), 141–165 (LVNL…LTNL), 167–188 (QLRH…TYGT), 189–213 (WPVL…IGNL), 215–238 (TLRE…IGNL), 239–262 (SELV…IGKL), 263–285 (QKLD…ELGL), 286–309 (ISSL…SFSQ), 311–334 (KNLT…IGEM), 335–358 (PELE…LGEN), 359–382 (GRLV…MCSG), 384–406 (RLMT…LGKC), 407–430 (ESLT…LFGL), 431–456 (PKLS…GVSG), 458–479 (LGQI…IGNL), 480–503 (SGVQ…IGRL), 505–527 (QLSK…ISRC), 528–551 (KLLT…LTGM), 552–575 (KILN…IASM), and 577–600 (SLTS…QFSY). N-linked (GlcNAc...) asparagine glycosylation is found at N212 and N237. N-linked (GlcNAc...) asparagine glycosylation is found at N312 and N346. Residue N420 is glycosylated (N-linked (GlcNAc...) asparagine). An N-linked (GlcNAc...) asparagine glycan is attached at N478. 3 N-linked (GlcNAc...) asparagine glycosylation sites follow: N558, N587, and N602. The helical transmembrane segment at 637-657 (KLLLVLGLLFCSMVFAIVAII) threads the bilayer. Over 658 to 1002 (KARSLRNASE…SGSPPDLLSN (345 aa)) the chain is Cytoplasmic. T682 carries the phosphothreonine modification. Positions 690–967 (LKEDNIIGKG…VQILTEIPKI (278 aa)) constitute a Protein kinase domain. ATP contacts are provided by residues 696–704 (IGKGGAGIV) and K718. Phosphotyrosine occurs at positions 765 and 803. The Proton acceptor role is filled by D816. A Phosphoserine modification is found at S851. Phosphotyrosine occurs at positions 859 and 866. Position 867 is a phosphothreonine (T867). Positions 969–1002 (LSKQQAAESDVTEKAPAINESSPDSGSPPDLLSN) are disordered. Over residues 989-1002 (SSPDSGSPPDLLSN) the composition is skewed to low complexity.

It belongs to the protein kinase superfamily. Ser/Thr protein kinase family. In terms of assembly, interacts with BAM1 and CLV1. Binds to the CLV3, CLE11, CLE18, CLE19, CLE22, CLE25, CLE26, CLE40, CLE41 and CLE42 mature peptides, probably via its extracellular leucine-rich repeat region. In terms of tissue distribution, expressed in seedlings, roots, rosette leaves, stems, inflorescences, flowers and siliques.

The protein resides in the cell membrane. It catalyses the reaction L-seryl-[protein] + ATP = O-phospho-L-seryl-[protein] + ADP + H(+). It carries out the reaction L-threonyl-[protein] + ATP = O-phospho-L-threonyl-[protein] + ADP + H(+). Functionally, necessary for male gametophyte development, as well as ovule specification and function. Involved in cell-cell communication process required during early anther development, and regulating cell division and differentiation to organize cell layers. Required for the development of high-ordered vascular strands within the leaf and a correlated control of leaf shape, size and symmetry. May regulate the CLV1-dependent CLV3-mediated signaling in meristems maintenance. In Arabidopsis thaliana (Mouse-ear cress), this protein is Leucine-rich repeat receptor-like serine/threonine-protein kinase BAM2 (BAM2).